The primary structure comprises 259 residues: MNLVDLWLTRSLSMCLLLQSFVLMILCFHSASMCPKGCLCSSSGGLNVTCSNANLKEIPRDLPPETVLLYLDSNQITSIPNEIFKDLHQLRVLNLSKNGIEFIDEHAFKGVAETLQTLDLSDNRIQSVHKNAFNNLKARARIANNPWHCDCTLQQVLRSMVSNHETAHNVICKTSVLDEHAGRPFLNAANDADLCNLPKKTTDYAMLVTMFGWFTMVISYVVYYVRQNQEDARRHLEYLKSLPSRQKKADEPDDISTVV.

An N-terminal signal peptide occupies residues 1 to 33 (MNLVDLWLTRSLSMCLLLQSFVLMILCFHSASM). In terms of domain architecture, LRRNT spans 34–64 (CPKGCLCSSSGGLNVTCSNANLKEIPRDLPP). N-linked (GlcNAc...) asparagine glycosylation occurs at asparagine 47. 3 LRR repeats span residues 65–86 (ETVL…IFKD), 89–110 (QLRV…AFKG), and 114–135 (TLQT…AFNN). The N-linked (GlcNAc...) asparagine glycan is linked to asparagine 94. One can recognise an LRRCT domain in the interval 145–197 (NPWHCDCTLQQVLRSMVSNHETAHNVICKTSVLDEHAGRPFLNAANDADLCNL). Residues 205 to 225 (AMLVTMFGWFTMVISYVVYYV) traverse the membrane as a helical segment.

It belongs to the LRRC3 family.

It is found in the membrane. The sequence is that of Leucine-rich repeat-containing protein 3B (LRRC3B) from Bos taurus (Bovine).